Consider the following 77-residue polypeptide: Large ribosomal subunit protein uL24 (77 aa).

The tract at residues 42 to 61 is disordered; the sequence is KKHQKPSQTNANGGVVESEG.

The protein belongs to the universal ribosomal protein uL24 family. In terms of assembly, part of the 50S ribosomal subunit.

Functionally, one of two assembly initiator proteins, it binds directly to the 5'-end of the 23S rRNA, where it nucleates assembly of the 50S subunit. In terms of biological role, one of the proteins that surrounds the polypeptide exit tunnel on the outside of the subunit. This Lactobacillus acidophilus (strain ATCC 700396 / NCK56 / N2 / NCFM) protein is Large ribosomal subunit protein uL24.